The sequence spans 213 residues: GTP cyclohydrolase 1 (213 aa).

Positions 104, 107, and 175 each coordinate Zn(2+).

The protein belongs to the GTP cyclohydrolase I family. Homomer.

It carries out the reaction GTP + H2O = 7,8-dihydroneopterin 3'-triphosphate + formate + H(+). Its pathway is cofactor biosynthesis; 7,8-dihydroneopterin triphosphate biosynthesis; 7,8-dihydroneopterin triphosphate from GTP: step 1/1. The chain is GTP cyclohydrolase 1 from Brucella canis (strain ATCC 23365 / NCTC 10854 / RM-666).